The chain runs to 377 residues: Chaperone protein DnaJ (377 aa).

The 66-residue stretch at D5–G70 folds into the J domain. The CR-type zinc-finger motif lies at G132–T210. Zn(2+)-binding residues include C145, C148, C162, C165, C184, C187, C198, and C201. CXXCXGXG motif repeat units lie at residues C145 to G152, C162 to G169, C184 to G191, and C198 to G205.

Belongs to the DnaJ family. Homodimer. Zn(2+) is required as a cofactor.

It is found in the cytoplasm. Functionally, participates actively in the response to hyperosmotic and heat shock by preventing the aggregation of stress-denatured proteins and by disaggregating proteins, also in an autonomous, DnaK-independent fashion. Unfolded proteins bind initially to DnaJ; upon interaction with the DnaJ-bound protein, DnaK hydrolyzes its bound ATP, resulting in the formation of a stable complex. GrpE releases ADP from DnaK; ATP binding to DnaK triggers the release of the substrate protein, thus completing the reaction cycle. Several rounds of ATP-dependent interactions between DnaJ, DnaK and GrpE are required for fully efficient folding. Also involved, together with DnaK and GrpE, in the DNA replication of plasmids through activation of initiation proteins. This is Chaperone protein DnaJ from Klebsiella pneumoniae (strain 342).